A 258-amino-acid polypeptide reads, in one-letter code: Phosphate import ATP-binding protein PstB (258 aa).

Residues 5–247 form the ABC transporter domain; that stretch reads LDLKGVNIYY…EKIFSNPTEK (243 aa). 37-44 is an ATP binding site; sequence GASGCGKT.

It belongs to the ABC transporter superfamily. Phosphate importer (TC 3.A.1.7) family. As to quaternary structure, the complex is composed of two ATP-binding proteins (PstB), two transmembrane proteins (PstC and PstA) and a solute-binding protein (PstS).

The protein localises to the cell membrane. It carries out the reaction phosphate(out) + ATP + H2O = ADP + 2 phosphate(in) + H(+). In terms of biological role, part of the ABC transporter complex PstSACB involved in phosphate import. Responsible for energy coupling to the transport system. The polypeptide is Phosphate import ATP-binding protein PstB (Mycobacterium leprae (strain TN)).